The sequence spans 672 residues: MTPSQVTFEIRGTLLPGEVFAMCGNCDALGNWSPQNAVPLTESETGESVWKAVIVLSRGMSVKYRYFRGCFLEPKTIGGPCQVIVHKWETHLQPRSITPLENEIIIDDGQFGIHNGVETLDSGWLTCQTEIRLRLHFSEKPPVSITKKKFKKSRFRVKLTLEGLEEDDDDDDKASPTVLHKMSNSLEISLISDNEFKCRHSQPECGYGLQPDRWTEYSIQTMEPDNLELIFDFFEEDLSEHVVQGDVLPGHVGTACLLSSTIAESERSAGILTLPIMSRSSRKTIGKVRVDFIIIKPLPGYSCSMQSSFSKYWKPRIPLDVGHRGAGNSTTTAKLAKVQENTIASLRNAASHGAAFVEFDVHLSKDLVPVVYHDLTCCLTMKRKYEADPVELFEIPVKELTFDQLQLLKLSHVTALKTKDQKQCMAEEENSFSENQPFPSLKMVLESLPENVGFNIEIKWICQHRDGVWDGNLSTYFDMNAFLDIILKTVLENSGKRRIVFSSFDADICTMVRQKQNKYPILFLTQGKSDIYPELMDLRSRTTPIAMSFAQFENILGINAHTEDLLRNPSYVQEAKDKGLVIFCWGDDTNDPENRRKLKEFGVNGLIYDRIYDWMPEQPNIFQVEQLERLKRELPELKNCLCPTVSHFIPPSFCMESKIHVDANGIDNVENA.

A CBM20 domain is found at 1–113 (MTPSQVTFEI…IIIDDGQFGI (113 aa)). Substrate-binding positions include Arg68 and 86–87 (HK). Ser175 is modified (phosphoserine). A GP-PDE domain is found at 318 to 618 (PLDVGHRGAG…DRIYDWMPEQ (301 aa)). Tyr608 carries the post-translational modification Phosphotyrosine.

Belongs to the glycerophosphoryl diester phosphodiesterase family.

The protein resides in the cytoplasm. Its subcellular location is the cytosol. The enzyme catalyses sn-glycerol 3-phosphocholine + H2O = sn-glycerol 3-phosphate + choline + H(+). Functionally, may be involved in the negative regulation of skeletal muscle differentiation, independently of its glycerophosphocholine phosphodiesterase activity. The protein is Glycerophosphocholine phosphodiesterase GPCPD1 (Gpcpd1) of Rattus norvegicus (Rat).